The sequence spans 76 residues: Protein OPG128 (76 aa).

An intrachain disulfide couples Cys17 to Cys21.

It belongs to the orthopoxvirus OPG128 family. In terms of assembly, interacts with sulfhydryl oxidase OPG072; this interaction involves formation of a transient disulfide-bonded intermediate, allowing disulfide bond transfer. Interacts with OPG088; this interaction involves formation of a transient disulfide-bonded intermediate, allowing disulfide bond transfer.

Its function is as follows. Late protein which probably participates in disulfide bond formation by functioning as a thiol-disulfide transfer protein between membrane-associated OPG072 and OPG08. The complete pathway for formation of disulfide bonds in intracellular virion membrane proteins sequentially involves oxidation of OPG072, OPG128 and OPG08. This is Protein OPG128 (OPG128) from Bos taurus (Bovine).